The following is a 233-amino-acid chain: Orotidine 5'-phosphate decarboxylase (233 aa).

Substrate is bound by residues aspartate 11, lysine 34, 61–70, threonine 117, arginine 179, glutamine 189, glycine 209, and arginine 210; that span reads DLKLHDIPNT. Lysine 63 serves as the catalytic Proton donor.

Belongs to the OMP decarboxylase family. Type 1 subfamily. As to quaternary structure, homodimer.

It catalyses the reaction orotidine 5'-phosphate + H(+) = UMP + CO2. It participates in pyrimidine metabolism; UMP biosynthesis via de novo pathway; UMP from orotate: step 2/2. Its function is as follows. Catalyzes the decarboxylation of orotidine 5'-monophosphate (OMP) to uridine 5'-monophosphate (UMP). The protein is Orotidine 5'-phosphate decarboxylase of Streptococcus agalactiae serotype Ia (strain ATCC 27591 / A909 / CDC SS700).